The following is a 704-amino-acid chain: Non-sulfated chondroitin lyase E66 (704 aa).

Positions 1 to 23 (MSIVLIIVIVVIFLICFLYLSNS) are cleaved as a signal peptide. Residues asparagine 236 and histidine 291 each act as proton acceptor in the active site. Catalysis depends on tyrosine 299, which acts as the Proton donor.

Belongs to the baculoviridae E66 family.

The protein resides in the virion membrane. Its subcellular location is the host nucleus. The protein localises to the host cytoplasm. Its function is as follows. Component of the polyhedra envelope. Plays an essential role in oral infectivity. May digest, with its chondroitin lyase activity, the chondroitin sulfate barrier of the peritrophic matrix of the host midgut to facilitate viral infection in the epithelial cells. The sequence is that of Non-sulfated chondroitin lyase E66 (P79) from Lepidoptera (butterflies and moths).